We begin with the raw amino-acid sequence, 208 residues long: Microcin J25-processing protein McjB (208 aa).

Its subcellular location is the cytoplasm. In terms of biological role, along with McjC, necessary and sufficient to process the inactive microcin J25 (McjA) precursor into the active peptide. In Escherichia coli, this protein is Microcin J25-processing protein McjB (mcjB).